Consider the following 585-residue polypeptide: Poly(A) RNA polymerase, mitochondrial (585 aa).

The transit peptide at 1–37 (MAARGVGLLTRLPVCSQRRNRIPRSISRLLSCPGTIA) directs the protein to the mitochondrion. Lysine 90 bears the N6-acetyllysine mark. ATP is bound by residues 107-109 (YES) and 244-245 (GC). 2 residues coordinate Mg(2+): aspartate 246 and aspartate 248. Residues 441–486 (ELLIKEFFEYFGNFAFNKNSINIRQGREQNKPDSSPLYIQNPFETS) enclose the PAP-associated domain. Residues 537-585 (PGSGHTSLSRKKKKKPMSEKVKGLLASIKSNSPDSSTDTSGKRTISTQA) form a disordered region. Positions 564-585 (IKSNSPDSSTDTSGKRTISTQA) are enriched in polar residues.

Belongs to the DNA polymerase type-B-like family. As to quaternary structure, homodimer. The cofactor is Mg(2+). It depends on Mn(2+) as a cofactor.

It is found in the cytoplasm. Its subcellular location is the mitochondrion. The enzyme catalyses RNA(n) + ATP = RNA(n)-3'-adenine ribonucleotide + diphosphate. Its function is as follows. Polymerase that creates the 3' poly(A) tail of mitochondrial transcripts. Can use all four nucleotides, but has higher activity with ATP and UTP (in vitro). Plays a role in replication-dependent histone mRNA degradation. May be involved in the terminal uridylation of mature histone mRNAs before their degradation is initiated. Might be responsible for the creation of some UAA stop codons which are not encoded in mtDNA. This Mus musculus (Mouse) protein is Poly(A) RNA polymerase, mitochondrial (Mtpap).